Here is a 456-residue protein sequence, read N- to C-terminus: Putative dihydroorotase (456 aa).

Belongs to the metallo-dependent hydrolases superfamily. DHOase family. Class I DHOase subfamily.

The catalysed reaction is (S)-dihydroorotate + H2O = N-carbamoyl-L-aspartate + H(+). It participates in pyrimidine metabolism; UMP biosynthesis via de novo pathway; (S)-dihydroorotate from bicarbonate: step 3/3. Its function is as follows. Catalyzes the reversible cyclization of carbamoyl aspartate to dihydroorotate. This is Putative dihydroorotase from Rhodopirellula baltica (strain DSM 10527 / NCIMB 13988 / SH1).